The primary structure comprises 344 residues: Arginine N-succinyltransferase (344 aa).

Residue Leu125 coordinates succinyl-CoA. The active-site Proton donor is the His229.

This sequence belongs to the arginine N-succinyltransferase family.

The catalysed reaction is succinyl-CoA + L-arginine = N(2)-succinyl-L-arginine + CoA + H(+). The protein operates within amino-acid degradation; L-arginine degradation via AST pathway; L-glutamate and succinate from L-arginine: step 1/5. Its function is as follows. Catalyzes the transfer of succinyl-CoA to arginine to produce N(2)-succinylarginine. This Citrobacter koseri (strain ATCC BAA-895 / CDC 4225-83 / SGSC4696) protein is Arginine N-succinyltransferase.